The primary structure comprises 320 residues: Lipoyl synthase (320 aa).

The [4Fe-4S] cluster site is built by Cys-67, Cys-72, Cys-78, Cys-93, Cys-97, Cys-100, and Ser-307. In terms of domain architecture, Radical SAM core spans 79-296 (FNHGTATFMI…RDKAQAMGFE (218 aa)).

It belongs to the radical SAM superfamily. Lipoyl synthase family. [4Fe-4S] cluster is required as a cofactor.

It is found in the cytoplasm. It catalyses the reaction [[Fe-S] cluster scaffold protein carrying a second [4Fe-4S](2+) cluster] + N(6)-octanoyl-L-lysyl-[protein] + 2 oxidized [2Fe-2S]-[ferredoxin] + 2 S-adenosyl-L-methionine + 4 H(+) = [[Fe-S] cluster scaffold protein] + N(6)-[(R)-dihydrolipoyl]-L-lysyl-[protein] + 4 Fe(3+) + 2 hydrogen sulfide + 2 5'-deoxyadenosine + 2 L-methionine + 2 reduced [2Fe-2S]-[ferredoxin]. The protein operates within protein modification; protein lipoylation via endogenous pathway; protein N(6)-(lipoyl)lysine from octanoyl-[acyl-carrier-protein]: step 2/2. Its function is as follows. Catalyzes the radical-mediated insertion of two sulfur atoms into the C-6 and C-8 positions of the octanoyl moiety bound to the lipoyl domains of lipoate-dependent enzymes, thereby converting the octanoylated domains into lipoylated derivatives. In Pasteurella multocida (strain Pm70), this protein is Lipoyl synthase.